We begin with the raw amino-acid sequence, 61 residues long: Beta-insect depressant toxin BotIT5 (61 aa).

Positions 1–61 constitute an LCN-type CS-alpha/beta domain; that stretch reads DGYIRKRDGC…TWKSETNTCG (61 aa). Intrachain disulfides connect C10–C60, C14–C35, C21–C42, and C25–C44. G61 is modified (glycine amide).

This sequence belongs to the long (4 C-C) scorpion toxin superfamily. Sodium channel inhibitor family. Beta subfamily. As to expression, expressed by the venom gland.

The protein localises to the secreted. Depressant insect beta-toxins cause a transient contraction paralysis followed by a slow flaccid paralysis. They bind voltage-independently at site-4 of sodium channels (Nav) and shift the voltage of activation toward more negative potentials thereby affecting sodium channel activation and promoting spontaneous and repetitive firing. This toxin is active only on insects. The chain is Beta-insect depressant toxin BotIT5 from Buthus occitanus tunetanus (Common European scorpion).